The primary structure comprises 275 residues: 2,3,4,5-tetrahydropyridine-2,6-dicarboxylate N-succinyltransferase (275 aa).

Positions 104 and 141 each coordinate substrate.

The protein belongs to the transferase hexapeptide repeat family. As to quaternary structure, homotrimer.

It localises to the cytoplasm. It carries out the reaction (S)-2,3,4,5-tetrahydrodipicolinate + succinyl-CoA + H2O = (S)-2-succinylamino-6-oxoheptanedioate + CoA. It functions in the pathway amino-acid biosynthesis; L-lysine biosynthesis via DAP pathway; LL-2,6-diaminopimelate from (S)-tetrahydrodipicolinate (succinylase route): step 1/3. This chain is 2,3,4,5-tetrahydropyridine-2,6-dicarboxylate N-succinyltransferase, found in Tolumonas auensis (strain DSM 9187 / NBRC 110442 / TA 4).